The following is a 210-amino-acid chain: MIEIEIRDINNNIVGKKEVPDIVFNNSASESVVHTAVVAYMANQRQGTHCTKTRSEVSGGGKKPWRQKHTGRARHGSIRSPLWRKGGIVFGPKPRDYYIQLPKQMKDTALFKALTMKYRDNEILLLDNLSLNRIKTKDMVEILKNLQLEESSVLIALPEKDEKVLLSARNIPYIGVVRAEDLNAYHVAMFDKVVFTVAGLDKLLSIKGVS.

Positions 49–76 are disordered; sequence HCTKTRSEVSGGGKKPWRQKHTGRARHG. Residues 63–76 are compositionally biased toward basic residues; it reads KPWRQKHTGRARHG.

It belongs to the universal ribosomal protein uL4 family. As to quaternary structure, part of the 50S ribosomal subunit.

Functionally, one of the primary rRNA binding proteins, this protein initially binds near the 5'-end of the 23S rRNA. It is important during the early stages of 50S assembly. It makes multiple contacts with different domains of the 23S rRNA in the assembled 50S subunit and ribosome. Its function is as follows. Forms part of the polypeptide exit tunnel. The chain is Large ribosomal subunit protein uL4 from Thermodesulfovibrio yellowstonii (strain ATCC 51303 / DSM 11347 / YP87).